The following is a 302-amino-acid chain: Protein translocase subunit SecF (302 aa).

A run of 6 helical transmembrane segments spans residues 12–32 (FFIYLSIALILFSVIVIFVKG), 138–158 (YAWYAVIISLIVLLAYITIRF), 166–186 (AILALAHDVIITLGFYSLFGI), 190–210 (LTAIAAFLTLAGYSLNDTIVV), 249–269 (FLVVFMMFLLGGRSIASFAFG), and 272–292 (VGVIIGTYSSLYIASPIVIGM).

The protein belongs to the SecD/SecF family. SecF subfamily. Forms a complex with SecD. Part of the essential Sec protein translocation apparatus which comprises SecA, SecYEG and auxiliary proteins SecDF. Other proteins may also be involved.

The protein resides in the cell inner membrane. Functionally, part of the Sec protein translocase complex. Interacts with the SecYEG preprotein conducting channel. SecDF uses the proton motive force (PMF) to complete protein translocation after the ATP-dependent function of SecA. The chain is Protein translocase subunit SecF from Petrotoga mobilis (strain DSM 10674 / SJ95).